The primary structure comprises 212 residues: ATP phosphoribosyltransferase (212 aa).

Belongs to the ATP phosphoribosyltransferase family. Short subfamily. In terms of assembly, heteromultimer composed of HisG and HisZ subunits.

It is found in the cytoplasm. It carries out the reaction 1-(5-phospho-beta-D-ribosyl)-ATP + diphosphate = 5-phospho-alpha-D-ribose 1-diphosphate + ATP. It participates in amino-acid biosynthesis; L-histidine biosynthesis; L-histidine from 5-phospho-alpha-D-ribose 1-diphosphate: step 1/9. Catalyzes the condensation of ATP and 5-phosphoribose 1-diphosphate to form N'-(5'-phosphoribosyl)-ATP (PR-ATP). Has a crucial role in the pathway because the rate of histidine biosynthesis seems to be controlled primarily by regulation of HisG enzymatic activity. This chain is ATP phosphoribosyltransferase, found in Prochlorococcus marinus (strain MIT 9515).